A 132-amino-acid chain; its full sequence is Small ribosomal subunit protein uS8 (132 aa).

Belongs to the universal ribosomal protein uS8 family. In terms of assembly, part of the 30S ribosomal subunit. Contacts proteins S5 and S12.

In terms of biological role, one of the primary rRNA binding proteins, it binds directly to 16S rRNA central domain where it helps coordinate assembly of the platform of the 30S subunit. In Leifsonia xyli subsp. xyli (strain CTCB07), this protein is Small ribosomal subunit protein uS8.